Consider the following 198-residue polypeptide: Putative 3-methyladenine DNA glycosylase (198 aa).

It belongs to the DNA glycosylase MPG family.

This chain is Putative 3-methyladenine DNA glycosylase, found in Oceanobacillus iheyensis (strain DSM 14371 / CIP 107618 / JCM 11309 / KCTC 3954 / HTE831).